A 297-amino-acid chain; its full sequence is HTH-type transcriptional regulator ArgP (297 aa).

Positions proline 4–threonine 60 constitute an HTH lysR-type domain. Residues phenylalanine 21–lysine 40 constitute a DNA-binding region (H-T-H motif).

Belongs to the LysR transcriptional regulatory family. In terms of assembly, homodimer.

In terms of biological role, controls the transcription of genes involved in arginine and lysine metabolism. This is HTH-type transcriptional regulator ArgP from Salmonella typhi.